Reading from the N-terminus, the 70-residue chain is Protein SlyX homolog (70 aa).

This sequence belongs to the SlyX family.

The polypeptide is Protein SlyX homolog (Nitrobacter winogradskyi (strain ATCC 25391 / DSM 10237 / CIP 104748 / NCIMB 11846 / Nb-255)).